A 418-amino-acid polypeptide reads, in one-letter code: Ankyrin repeat domain-containing protein 61 (418 aa).

ANK repeat units lie at residues 27–57, 75–104, 132–161, 167–196, 200–229, 234–273, 277–306, and 310–343; these read ALHS…NQPI, ESII…DPEV, NRTH…QVNT, NKRS…DVNA, ASMT…NVNC, TGNT…KVNA, KGQT…NVNI, and NGES…PLRM.

In Homo sapiens (Human), this protein is Ankyrin repeat domain-containing protein 61 (ANKRD61).